Reading from the N-terminus, the 146-residue chain is D-aminoacyl-tRNA deacylase (146 aa).

The Gly-cisPro motif, important for rejection of L-amino acids motif lies at 137–138 (GP).

The protein belongs to the DTD family. In terms of assembly, homodimer.

It is found in the cytoplasm. It carries out the reaction glycyl-tRNA(Ala) + H2O = tRNA(Ala) + glycine + H(+). It catalyses the reaction a D-aminoacyl-tRNA + H2O = a tRNA + a D-alpha-amino acid + H(+). An aminoacyl-tRNA editing enzyme that deacylates mischarged D-aminoacyl-tRNAs. Also deacylates mischarged glycyl-tRNA(Ala), protecting cells against glycine mischarging by AlaRS. Acts via tRNA-based rather than protein-based catalysis; rejects L-amino acids rather than detecting D-amino acids in the active site. By recycling D-aminoacyl-tRNA to D-amino acids and free tRNA molecules, this enzyme counteracts the toxicity associated with the formation of D-aminoacyl-tRNA entities in vivo and helps enforce protein L-homochirality. The chain is D-aminoacyl-tRNA deacylase from Desulfatibacillum aliphaticivorans.